The chain runs to 399 residues: Phosphoglycerate kinase (399 aa).

Substrate-binding positions include 22–24 (DFN), Arg38, 61–64 (HLGR), Arg120, and Arg153. Residues Lys204, Glu326, and 352-355 (GGDT) contribute to the ATP site.

This sequence belongs to the phosphoglycerate kinase family. Monomer.

It localises to the cytoplasm. It carries out the reaction (2R)-3-phosphoglycerate + ATP = (2R)-3-phospho-glyceroyl phosphate + ADP. The protein operates within carbohydrate degradation; glycolysis; pyruvate from D-glyceraldehyde 3-phosphate: step 2/5. The protein is Phosphoglycerate kinase of Geotalea uraniireducens (strain Rf4) (Geobacter uraniireducens).